The sequence spans 597 residues: MAQAWAFLLPVLVFGSYVTSLFFPSYISGPLCGGDGGGRSLFLCAQAPKDQDPSPAVSTMYKTAFHFQPAKNWMNDPSGPMYFNGFYHEFYQYNLNGPIFGDIVWGHSVSTDLVNWIGLEPALVRDTPSDIDGCWTGSVTILPGGKPVIIYTGGDKDQHQAQNIAFPKNRSDPYLREWIKAANNPVLRPDEPGMNSIEFRDPTTGWIGPDGLWRMAVGGELNGYSAALLYKSEDFLNWTKVDHPLYSHNGSNMWECPDFFAVLPGNNAGLDLSAAIPQGAKHALKMSVDSVDKYMIGVYDLQRDAFVPDNVVDDRRLWLRIDYGTFYASKSFFDSNKNRRIIWGWSRETDSPSDDLEKGWAGLHTIPRTIWLADNGKQLLQWPVEEIESLRTNEISHQGIELNKGDLFEIKEVDAFQADVEIGFELASIDDADPFDPSWLLDPEKHCGEAGASVPGGIGPFGLVILASDNMDEHTEVYFRVYKSQEKYMVLMCSDLRRSSLRPDLEKPAYGGFFEFDLEKERKISLRTLIDRSAVESFGGGGRVCITSRVYPAVLADVGRAHIYAFNNGSATVRVPQLSAWTMRKAQVNVEKGWSAI.

The signal sequence occupies residues 1 to 20 (MAQAWAFLLPVLVFGSYVTS). Aspartate 76 is a catalytic residue. N-linked (GlcNAc...) asparagine glycosylation is found at asparagine 169, asparagine 237, and asparagine 249. A disulfide bridge connects residues cysteine 447 and cysteine 493. An N-linked (GlcNAc...) asparagine glycan is attached at asparagine 568.

This sequence belongs to the glycosyl hydrolase 32 family.

The enzyme catalyses Hydrolysis of terminal, non-reducing (2-&gt;1)-linked beta-D-fructofuranose residues in fructans.. Inhibited by sucrose. Hydrolyzes inulin-type beta-(2,1)-fructans and beta-(2,1)-linkages in branched fructans. Has low activity against beta-(2,6)-linked fructans. May play a role as a beta-(2,1)-trimmer during graminan biosynthesis. This is Fructan 1-exohydrolase w1 from Triticum aestivum (Wheat).